Reading from the N-terminus, the 727-residue chain is Phosphoribosylformylglycinamidine synthase subunit PurL (727 aa).

Residue His47 is part of the active site. Positions 50 and 82 each coordinate ATP. Glu84 is a binding site for Mg(2+). Residues 85–88 and Arg107 each bind substrate; that span reads SHNH. The Proton acceptor role is filled by His86. Asp108 is a Mg(2+) binding site. A substrate-binding site is contributed by Gln229. Asp257 provides a ligand contact to Mg(2+). 301 to 303 contacts substrate; that stretch reads ESQ. Residues Asp486 and Gly523 each coordinate ATP. Asn524 is a Mg(2+) binding site. Ser526 serves as a coordination point for substrate.

It belongs to the FGAMS family. As to quaternary structure, monomer. Part of the FGAM synthase complex composed of 1 PurL, 1 PurQ and 2 PurS subunits.

The protein resides in the cytoplasm. It catalyses the reaction N(2)-formyl-N(1)-(5-phospho-beta-D-ribosyl)glycinamide + L-glutamine + ATP + H2O = 2-formamido-N(1)-(5-O-phospho-beta-D-ribosyl)acetamidine + L-glutamate + ADP + phosphate + H(+). It participates in purine metabolism; IMP biosynthesis via de novo pathway; 5-amino-1-(5-phospho-D-ribosyl)imidazole from N(2)-formyl-N(1)-(5-phospho-D-ribosyl)glycinamide: step 1/2. In terms of biological role, part of the phosphoribosylformylglycinamidine synthase complex involved in the purines biosynthetic pathway. Catalyzes the ATP-dependent conversion of formylglycinamide ribonucleotide (FGAR) and glutamine to yield formylglycinamidine ribonucleotide (FGAM) and glutamate. The FGAM synthase complex is composed of three subunits. PurQ produces an ammonia molecule by converting glutamine to glutamate. PurL transfers the ammonia molecule to FGAR to form FGAM in an ATP-dependent manner. PurS interacts with PurQ and PurL and is thought to assist in the transfer of the ammonia molecule from PurQ to PurL. This is Phosphoribosylformylglycinamidine synthase subunit PurL from Petrotoga mobilis (strain DSM 10674 / SJ95).